A 72-amino-acid chain; its full sequence is Potassium channel toxin epsilon-KTx 1.1 (72 aa).

The signal sequence occupies residues 1 to 30 (MKLSCGFLLILLVLSAMIATFSEVEAMKPS). 4 disulfide bridges follow: Cys34–Cys42, Cys37–Cys58, Cys41–Cys51, and Cys46–Cys56. A propeptide spanning residues 60–72 (GRSDLNDELEKYQ) is cleaved from the precursor.

The protein belongs to the short scorpion toxin superfamily. Potassium channel inhibitor family. Epsilon-KTx 01 subfamily. As to expression, expressed by the venom gland.

It is found in the secreted. Its function is as follows. Potassium channel blocker. At 3 uM, this toxin blocks voltage-independently voltage-gated potassium channels rKv1.2/KCNA2 (25%), hKv1.3/KCNA3 (27%), rKv4.2/KCND2 (25%), Kv10.1/KCNH1/EAG1 (15%), Kv11/hERG (12%), and Shaker-IR (10%). On hKv1.3/KCNA3, the IC(50) is 17.1 +-3.3 uM. This chain is Potassium channel toxin epsilon-KTx 1.1, found in Tityus serrulatus (Brazilian scorpion).